We begin with the raw amino-acid sequence, 365 residues long: Zinc finger MYND domain-containing protein 12 (365 aa).

Residues Cys17, Cys20, Cys28, Cys31, Cys37, His41, His50, and Cys54 each contribute to the Zn(2+) site. An MYND-type; atypical zinc finger spans residues 17 to 54; it reads CEVCEAPAERVCAACTVTYYCGVVHQKADWDSIHEKIC. TPR repeat units lie at residues 172-205 and 214-247; these read SLLHRNLGLLYIAKKNYEEARYHLANDIYFASCA and SGGYFHLANIFYDLKKLDLADTLYTKVSEIWHAY.

As to expression, expressed predominantly in the testis.

Its subcellular location is the cell projection. It localises to the cilium. The protein localises to the flagellum. Required for sperm flagellum function and male fertility. This is Zinc finger MYND domain-containing protein 12 (ZMYND12) from Homo sapiens (Human).